The chain runs to 88 residues: Meiosis expressed gene 1 protein homolog (88 aa).

Belongs to the MEIG1 family. Interacts with PACRG. Interacts with MORN3.

Functionally, essential for spermiogenesis. This Homo sapiens (Human) protein is Meiosis expressed gene 1 protein homolog.